The sequence spans 531 residues: Keratin, type II cytoskeletal 79 (531 aa).

The span at Met1–Thr12 shows a compositional bias: polar residues. Residues Met1 to Gly55 form a disordered region. The head stretch occupies residues Met1–Gln138. Over residues Arg28–Arg40 the composition is skewed to low complexity. The segment covering Gly41–Gly55 has biased composition (gly residues). The coil 1A stretch occupies residues Glu139–Leu174. Residues Glu139–Met453 form the IF rod domain. The interval Gln175–Tyr194 is linker 1. Residues Leu195–Val286 are coil 1B. Residues Gln287–Ile310 form a linker 12 region. The coil 2 stretch occupies residues Ile311 to Glu449. Residues Glu450–Tyr531 are tail.

The protein belongs to the intermediate filament family. Heterotetramer of two type I and two type II keratins.

The polypeptide is Keratin, type II cytoskeletal 79 (Krt79) (Mus musculus (Mouse)).